A 406-amino-acid chain; its full sequence is Leucine aminopeptidase 1 (406 aa).

An N-terminal signal peptide occupies residues 1–18 (MKVTNASLLALLLPAVSG). Positions 19-94 (RFVETGEPDR…LRAMTASRKK (76 aa)) are excised as a propeptide. Residue N186 is glycosylated (N-linked (GlcNAc...) asparagine). Zn(2+) is bound by residues H194, D213, E252, and D279. An N-linked (GlcNAc...) asparagine glycan is attached at N306. C328 and C332 are oxidised to a cystine. Zn(2+) is bound at residue H361.

This sequence belongs to the peptidase M28 family. M28E subfamily. In terms of assembly, monomer. Zn(2+) is required as a cofactor.

It localises to the secreted. Its function is as follows. Extracellular aminopeptidase that allows assimilation of proteinaceous substrates. This is Leucine aminopeptidase 1 (LAP1) from Chaetomium globosum (strain ATCC 6205 / CBS 148.51 / DSM 1962 / NBRC 6347 / NRRL 1970) (Soil fungus).